The primary structure comprises 94 residues: Protein canopy homolog 1 (94 aa).

This sequence belongs to the canopy family.

This is Protein canopy homolog 1 (Cnpy1) from Mus musculus (Mouse).